We begin with the raw amino-acid sequence, 31 residues long: Photosystem II reaction center protein T (31 aa).

Residues 3–23 form a helical membrane-spanning segment; that stretch reads ALVYTFLLIGTLGIIFFAIFF.

Belongs to the PsbT family. PSII is composed of 1 copy each of membrane proteins PsbA, PsbB, PsbC, PsbD, PsbE, PsbF, PsbH, PsbI, PsbJ, PsbK, PsbL, PsbM, PsbT, PsbY, PsbZ, Psb30/Ycf12, at least 3 peripheral proteins of the oxygen-evolving complex and a large number of cofactors. It forms dimeric complexes.

It is found in the plastid. Its subcellular location is the chloroplast thylakoid membrane. In terms of biological role, found at the monomer-monomer interface of the photosystem II (PS II) dimer, plays a role in assembly and dimerization of PSII. PSII is a light-driven water plastoquinone oxidoreductase, using light energy to abstract electrons from H(2)O, generating a proton gradient subsequently used for ATP formation. This chain is Photosystem II reaction center protein T, found in Stigeoclonium helveticum (Green alga).